The chain runs to 1490 residues: Leucine-rich repeat-containing protein 7 (1490 aa).

17 LRR repeats span residues 23–44, 47–68, 70–91, 93–114, 116–137, 139–161, 162–183, 185–206, 208–229, 231–253, 254–275, 277–298, 300–321, 323–344, 346–367, 369–391, and 392–413; these read IISV…VFNF, TLEE…LFNC, ALRK…IASL, NLKE…IKCC, CLTI…FTQL, NLTQ…GRLV, KLRI…MHKL, QLER…LDQI, NLRE…IGKL, MLVY…SGCE, ALED…IGLL, KLTT…IGNL, LLEE…IGYL, SLRT…IGSC, NVTV…IGQM, RLRV…TKLK, and ELAA…QTEA. 3 positions are modified to phosphoserine: S439, S441, and S443. Residues 663–676 are compositionally biased toward basic and acidic residues; it reads KKESTDESEVDKTH. Disordered stretches follow at residues 663–704, 785–807, and 822–899; these read KKES…NTRM, AGEN…AHGR, and ELEQ…YHDP. A compositionally biased stretch (polar residues) spans 677–686; sequence CLNNSVSSGT. Over residues 687-700 the composition is skewed to low complexity; the sequence is YSDYSPSQASSASS. T831 is modified (phosphothreonine). Position 850 is a phosphoserine (S850). Positions 859-871 are enriched in low complexity; sequence PSKLETTPTTSPL. At T865 the chain carries Phosphothreonine. S869 bears the Phosphoserine mark. A compositionally biased stretch (basic and acidic residues) spans 872–882; it reads PERKDHMKEPT. Phosphoserine occurs at positions 947, 949, and 1118. The segment covering 1134–1144 has biased composition (basic and acidic residues); sequence PHELPPGDRYG. Disordered stretches follow at residues 1134–1158 and 1196–1218; these read PHEL…QSSI and QRRP…TRPV. R1149 bears the Omega-N-methylarginine mark. Polar residues predominate over residues 1196 to 1217; sequence QRRPLSARSYSTESYGASQTRP. At S1233 the chain carries Phosphoserine. 2 disordered regions span residues 1238–1265 and 1282–1312; these read GNYG…SCGK and RLDR…PYPL. Positions 1243–1263 are enriched in basic and acidic residues; sequence KTSDNSDIKTRPTPVKGEESC. Over residues 1286–1307 the composition is skewed to polar residues; that stretch reads TPSQQSNILDNGQEDVSPSGQW. A phosphoserine mark is found at S1288 and S1392. Residues 1398–1488 form the PDZ domain; sequence EQFCVRIEKN…TVDLVIQREL (91 aa).

This sequence belongs to the LAP (LRR and PDZ) protein family. In terms of assembly, interacts with CNKSR2 and DLG4. Interacts with CTNND2/Catenin delta-2. Forms a complex with N-cadherin through CTNND2. Interacts with CAMK2A. As to expression, expressed in brain (at protein level).

The protein localises to the cytoplasm. Its subcellular location is the postsynaptic density. Required for normal synaptic spine architecture and function. Necessary for DISC1 and GRM5 localization to postsynaptic density complexes and for both N-methyl D-aspartate receptor-dependent and metabotropic glutamate receptor-dependent long term depression. This chain is Leucine-rich repeat-containing protein 7 (Lrrc7), found in Mus musculus (Mouse).